The primary structure comprises 476 residues: Glutamate--tRNA ligase (476 aa).

A 'HIGH' region motif is present at residues 9-19 (PSPTGTLHIGT). Positions 248 to 252 (KLSKR) match the 'KMSKS' region motif. Lys-251 contacts ATP.

Belongs to the class-I aminoacyl-tRNA synthetase family. Glutamate--tRNA ligase type 1 subfamily. Monomer.

The protein localises to the cytoplasm. The enzyme catalyses tRNA(Glu) + L-glutamate + ATP = L-glutamyl-tRNA(Glu) + AMP + diphosphate. In terms of biological role, catalyzes the attachment of glutamate to tRNA(Glu) in a two-step reaction: glutamate is first activated by ATP to form Glu-AMP and then transferred to the acceptor end of tRNA(Glu). This is Glutamate--tRNA ligase from Prochlorococcus marinus (strain MIT 9313).